A 263-amino-acid polypeptide reads, in one-letter code: Type III pantothenate kinase (263 aa).

14–21 contacts ATP; that stretch reads DIGNTSVN. 115–118 serves as a coordination point for substrate; it reads GADR. Asp117 (proton acceptor) is an active-site residue. Asp137 is a K(+) binding site. Thr140 lines the ATP pocket. Substrate is bound at residue Thr192.

It belongs to the type III pantothenate kinase family. Homodimer. Requires NH4(+) as cofactor. K(+) is required as a cofactor.

It localises to the cytoplasm. The enzyme catalyses (R)-pantothenate + ATP = (R)-4'-phosphopantothenate + ADP + H(+). The protein operates within cofactor biosynthesis; coenzyme A biosynthesis; CoA from (R)-pantothenate: step 1/5. In terms of biological role, catalyzes the phosphorylation of pantothenate (Pan), the first step in CoA biosynthesis. This Dehalococcoides mccartyi (strain CBDB1) protein is Type III pantothenate kinase.